The following is a 203-amino-acid chain: A-type ATP synthase subunit E (203 aa).

This sequence belongs to the V-ATPase E subunit family. Has multiple subunits with at least A(3), B(3), C, D, E, F, H, I and proteolipid K(x).

Its subcellular location is the cell membrane. Component of the A-type ATP synthase that produces ATP from ADP in the presence of a proton gradient across the membrane. The chain is A-type ATP synthase subunit E from Thermococcus sibiricus (strain DSM 12597 / MM 739).